Reading from the N-terminus, the 326-residue chain is GTP 3',8-cyclase (326 aa).

Residues 7 to 240 enclose the Radical SAM core domain; it reads AFARKFYYLR…AQVFHHSDYQ (234 aa). Residue R16 coordinates GTP. [4Fe-4S] cluster-binding residues include C23 and C27. Y29 serves as a coordination point for S-adenosyl-L-methionine. A [4Fe-4S] cluster-binding site is contributed by C30. R65 is a binding site for GTP. G69 contributes to the S-adenosyl-L-methionine binding site. T96 serves as a coordination point for GTP. S-adenosyl-L-methionine is bound at residue S120. K157 serves as a coordination point for GTP. Residue M191 coordinates S-adenosyl-L-methionine. C254 and C257 together coordinate [4Fe-4S] cluster. Residue 259 to 261 coordinates GTP; the sequence is RLR. C271 provides a ligand contact to [4Fe-4S] cluster.

The protein belongs to the radical SAM superfamily. MoaA family. Monomer and homodimer. The cofactor is [4Fe-4S] cluster.

It catalyses the reaction GTP + AH2 + S-adenosyl-L-methionine = (8S)-3',8-cyclo-7,8-dihydroguanosine 5'-triphosphate + 5'-deoxyadenosine + L-methionine + A + H(+). Its pathway is cofactor biosynthesis; molybdopterin biosynthesis. Its function is as follows. Catalyzes the cyclization of GTP to (8S)-3',8-cyclo-7,8-dihydroguanosine 5'-triphosphate. This is GTP 3',8-cyclase from Yersinia pestis.